A 157-amino-acid polypeptide reads, in one-letter code: Glutathione peroxidase homolog BsaA (157 aa).

The active site involves Cys-35.

The protein belongs to the glutathione peroxidase family.

This Halalkalibacterium halodurans (strain ATCC BAA-125 / DSM 18197 / FERM 7344 / JCM 9153 / C-125) (Bacillus halodurans) protein is Glutathione peroxidase homolog BsaA (bsaA).